We begin with the raw amino-acid sequence, 172 residues long: uncharacterized protein (172 aa).

A run of 4 helical transmembrane segments spans residues 46 to 66, 76 to 96, 104 to 124, and 129 to 149; these read MFSI…FLYP, LLSL…VGLF, WKFL…LGWS, and FFYA…FTEI.

It is found in the endoplasmic reticulum membrane. This is an uncharacterized protein from Schizosaccharomyces pombe (strain 972 / ATCC 24843) (Fission yeast).